Reading from the N-terminus, the 538-residue chain is Bifunctional purine biosynthesis protein PurH (538 aa).

Residues 11–158 (PDLHRVRRAL…KNHAYTGVVT (148 aa)) enclose the MGS-like domain.

It belongs to the PurH family.

The catalysed reaction is (6R)-10-formyltetrahydrofolate + 5-amino-1-(5-phospho-beta-D-ribosyl)imidazole-4-carboxamide = 5-formamido-1-(5-phospho-D-ribosyl)imidazole-4-carboxamide + (6S)-5,6,7,8-tetrahydrofolate. It carries out the reaction IMP + H2O = 5-formamido-1-(5-phospho-D-ribosyl)imidazole-4-carboxamide. Its pathway is purine metabolism; IMP biosynthesis via de novo pathway; 5-formamido-1-(5-phospho-D-ribosyl)imidazole-4-carboxamide from 5-amino-1-(5-phospho-D-ribosyl)imidazole-4-carboxamide (10-formyl THF route): step 1/1. It participates in purine metabolism; IMP biosynthesis via de novo pathway; IMP from 5-formamido-1-(5-phospho-D-ribosyl)imidazole-4-carboxamide: step 1/1. The sequence is that of Bifunctional purine biosynthesis protein PurH from Bartonella bacilliformis (strain ATCC 35685 / KC583 / Herrer 020/F12,63).